We begin with the raw amino-acid sequence, 561 residues long: Embryonal Fyn-associated substrate (561 aa).

Residues 5–68 form the SH3 domain; sequence TSTQLARALY…PANRVKLLPA (64 aa). Disordered regions lie at residues 68-123, 171-215, 240-372, and 390-422; these read AGPA…CPPS, HPLT…PGPP, LADG…HNEY, and DKAQ…ALSP. Residues 103-123 are compositionally biased toward pro residues; it reads VPPPARPCPTSGPPAGPCPPS. Tyr253 is modified (phosphotyrosine; by SRC). Short sequence motifs (SH3-binding) lie at residues 305–311 and 335–341; these read RPLPALP and RPLPPPP. A compositionally biased stretch (pro residues) spans 308-325; it reads PALPVPEAPSPSPVPSPA. The segment covering 352–372 has biased composition (basic and acidic residues); the sequence is VEGDPEGREMEDDPAGHHNEY. Residues 438–488 are divergent helix-loop-helix motif; it reads FYAGQCQSHYSALQAAVAALMSSTQANQPPRLFVPHSKRVVVAAHRLVFVG.

The protein belongs to the CAS family. In terms of processing, phosphorylated on multiple tyrosine residues. Phosphorylated on tyrosines by FYN and SRC. As to expression, the protein has been detected in lung and placenta.

In terms of biological role, docking protein which plays a central coordinating role for tyrosine-kinase-based signaling related to cell adhesion. May serve as an activator of SRC and a downstream effector. Interacts with the SH3 domain of FYN and with CRK, SRC, and YES. The protein is Embryonal Fyn-associated substrate (EFS) of Homo sapiens (Human).